Here is a 206-residue protein sequence, read N- to C-terminus: Max dimerization protein 3 (206 aa).

The tract at residues I8 to A25 is interaction with SIN3A and SIN3B. One can recognise a bHLH domain in the interval S57–L109.

Efficient DNA binding requires dimerization with another bHLH protein. Binds DNA as a heterodimer with MAX. Interacts with SIN3A AND SIN3B. Interacts with RNF17.

The protein resides in the nucleus. Transcriptional repressor. Binds with MAX to form a sequence-specific DNA-binding protein complex which recognizes the core sequence 5'-CAC[GA]TG-3'. Antagonizes MYC transcriptional activity by competing for MAX and suppresses MYC dependent cell transformation. The chain is Max dimerization protein 3 (Mxd3) from Rattus norvegicus (Rat).